Here is a 398-residue protein sequence, read N- to C-terminus: Acetate kinase (398 aa).

N7 is a binding site for Mg(2+). ATP is bound at residue K14. R92 is a binding site for substrate. The active-site Proton donor/acceptor is the D149. ATP-binding positions include 209–213, 284–286, and 332–336; these read HLGNG, DFR, and GVGEN. E385 contributes to the Mg(2+) binding site.

The protein belongs to the acetokinase family. In terms of assembly, homodimer. Requires Mg(2+) as cofactor. Mn(2+) is required as a cofactor.

The protein resides in the cytoplasm. It carries out the reaction acetate + ATP = acetyl phosphate + ADP. Its pathway is metabolic intermediate biosynthesis; acetyl-CoA biosynthesis; acetyl-CoA from acetate: step 1/2. Functionally, catalyzes the formation of acetyl phosphate from acetate and ATP. Can also catalyze the reverse reaction. The sequence is that of Acetate kinase from Clostridioides difficile (strain 630) (Peptoclostridium difficile).